The following is a 444-amino-acid chain: Probable D-serine dehydratase (444 aa).

Lys-118 bears the N6-(pyridoxal phosphate)lysine mark.

This sequence belongs to the serine/threonine dehydratase family. DsdA subfamily. Pyridoxal 5'-phosphate serves as cofactor.

The catalysed reaction is D-serine = pyruvate + NH4(+). The sequence is that of Probable D-serine dehydratase from Acinetobacter baumannii (strain AB0057).